Here is a 725-residue protein sequence, read N- to C-terminus: uncharacterized protein (725 aa).

The FtsK domain maps to 363–556; the sequence is GTYVEIPLYS…FVTTRPEDSC (194 aa). ATP is bound at residue 382-389; it reads GRTRGGKS.

The protein belongs to the FtsK/SpoIIIE/SftA family.

Functionally, probable DNA motor protein. May track DNA in a ATP-dependent manner by generating positive supercoils in front of it and negative supercoils behind it. This is an uncharacterized protein from Nostoc sp. (strain PCC 7120 / SAG 25.82 / UTEX 2576).